The sequence spans 313 residues: Olfactory receptor 1M1 (313 aa).

Topologically, residues 1 to 25 (MEPQNHTSASEFILLGLSEKPDHDP) are extracellular. Asn5 carries an N-linked (GlcNAc...) asparagine glycan. A helical transmembrane segment spans residues 26-46 (VLFSLFLCMYMITVVGNLLII). Residues 47–54 (LAISFDSH) lie on the Cytoplasmic side of the membrane. The chain crosses the membrane as a helical span at residues 55 to 75 (LHTPMYFFLANLSLVDFCLAT). At 76 to 97 (NTVPKMLVNIQTRNKSISYPCC) the chain is on the extracellular side. Residue Asn89 is glycosylated (N-linked (GlcNAc...) asparagine). Cysteines 97 and 179 form a disulfide. A helical transmembrane segment spans residues 98-118 (LTQMYFFHFFGIMDSVLIAVM). The Cytoplasmic segment spans residues 119–142 (AYDRFVAICHPLHYSTIMSPRLCG). A helical transmembrane segment spans residues 143–163 (LLVGVPWVYSCFISLTHILLM). Topologically, residues 164 to 196 (ARLVFCGKNELPHYFCDLTPLLRLSCTDTTVNK) are extracellular. The chain crosses the membrane as a helical span at residues 197–217 (IFVLIVAGMVIATPFVCILAS). The Cytoplasmic portion of the chain corresponds to 218 to 244 (YARIIVAIMKVPSAGGRKKAFSTCSSH). The chain crosses the membrane as a helical span at residues 245-265 (LSVVALFYGTTIGVYLCPSSV). Topologically, residues 266–274 (RTAVKEKAS) are extracellular. Residues 275 to 292 (AVMYTAVTPMLNPFIYSL) form a helical membrane-spanning segment. Over 293–313 (RNRDLKGALKKIINRKISTSS) the chain is Cytoplasmic.

The protein belongs to the G-protein coupled receptor 1 family. As to expression, expressed in testis.

It localises to the cell membrane. Odorant receptor. This chain is Olfactory receptor 1M1, found in Mus musculus (Mouse).